A 420-amino-acid polypeptide reads, in one-letter code: Methyltransferase/ribosomally synthesized cyclic peptide gymnopeptides precursor gymMA1 (420 aa).

The segment at 1-251 (MQSSTQKQAG…GISTFYIPPK (251 aa)) is methyltransferase domain. Residues Arg72, Tyr76, and Tyr98 contribute to the active site. Residues Tyr98, His100, Val103, Ala130, Gln172, Ala213, Ser244, and Thr245 each contribute to the S-adenosyl-L-methionine site. The clasp domain stretch occupies residues 252–378 (ELKDPSMDIM…WALRCAMKKM (127 aa)). Residues 379 to 392 (PSSFMDEVDANNLP) are precursor leader. N-methylvaline is present on residues Val394 and Val396. An N-methylglycine modification is found at Gly398. Position 399 is an N-methylvaline (Val399). Ala400 bears the N-methylalanine mark. Gly402 carries the N-methylglycine modification. N-methylvaline occurs at positions 404, 406, 408, and 410.

In the N-terminal section; belongs to the precorrin methyltransferase family. Homodimer. In terms of processing, gymMA1 automethylates at Val-394, Val-396, Gly-398, Val-399, Ala-400, Gly-402, Val-404, Val-406, Val-408 and Val-410 before being processed by a prolyloligopeptidase which likely forms a peptidyl ester upon removal of the follower propeptide, which then undergoes macrocyclization with the N-terminus of the modified core peptide. Peptide backbone alpha-N-methylations change the physicochemical properties of amide bonds to provide structural constraints and other favorable characteristics including biological membrane permeability to peptides.

The protein operates within mycotoxin biosynthesis. Its function is as follows. Fusion protein of the methyltransferase gymM1 and the gymnopeptides precursor; part of the gene cluster that mediates the biosynthesis of gymnopeptides, highly methylated cyclic octadecapeptides with striking antiproliferative activity on several human cancer cell lines. Gymnopeptides derive from the C-terminus of the gymMA1 protein, and it is the gymMA1 protein that methylates its own C-terminus using S-adenosyl methionine (SAM). The C-terminus is subsequently cleaved off and macrocyclized by a prolyloligopeptidase to give the final product. This is Methyltransferase/ribosomally synthesized cyclic peptide gymnopeptides precursor gymMA1 from Gymnopus fusipes (Spindle toughshank).